A 245-amino-acid polypeptide reads, in one-letter code: 1-(5-phosphoribosyl)-5-[(5-phosphoribosylamino)methylideneamino] imidazole-4-carboxamide isomerase (245 aa).

Residue D7 is the Proton acceptor of the active site. The Proton donor role is filled by D129.

It belongs to the HisA/HisF family.

The protein resides in the cytoplasm. The catalysed reaction is 1-(5-phospho-beta-D-ribosyl)-5-[(5-phospho-beta-D-ribosylamino)methylideneamino]imidazole-4-carboxamide = 5-[(5-phospho-1-deoxy-D-ribulos-1-ylimino)methylamino]-1-(5-phospho-beta-D-ribosyl)imidazole-4-carboxamide. The protein operates within amino-acid biosynthesis; L-histidine biosynthesis; L-histidine from 5-phospho-alpha-D-ribose 1-diphosphate: step 4/9. In Pectobacterium atrosepticum (strain SCRI 1043 / ATCC BAA-672) (Erwinia carotovora subsp. atroseptica), this protein is 1-(5-phosphoribosyl)-5-[(5-phosphoribosylamino)methylideneamino] imidazole-4-carboxamide isomerase.